Consider the following 401-residue polypeptide: Hemorrhagic metalloproteinase-disintegrin-like kaouthiagin (401 aa).

Residues lysine 14–proline 208 enclose the Peptidase M12B domain. Positions 17 and 101 each coordinate Ca(2+). Residue asparagine 112 is glycosylated (N-linked (GlcNAc...) asparagine). 3 cysteine pairs are disulfide-bonded: cysteine 125/cysteine 203, cysteine 164/cysteine 187, and cysteine 166/cysteine 171. Histidine 149 contributes to the Zn(2+) binding site. Glutamate 150 is a catalytic residue. Residues histidine 153 and histidine 159 each coordinate Zn(2+). Cysteine 203, asparagine 206, isoleucine 218, asparagine 221, phenylalanine 223, glutamate 225, glutamate 228, and aspartate 231 together coordinate Ca(2+). Residues proline 216–asparagine 285 enclose the Disintegrin domain. 11 cysteine pairs are disulfide-bonded: cysteine 219–cysteine 248, cysteine 230–cysteine 243, cysteine 232–cysteine 238, cysteine 257–cysteine 277, cysteine 264–cysteine 296, cysteine 289–cysteine 301, cysteine 308–cysteine 358, cysteine 323–cysteine 366, cysteine 336–cysteine 346, cysteine 353–cysteine 389, and cysteine 383–cysteine 394. The D/ECD-tripeptide motif lies at aspartate 263 to aspartate 265. Positions 265, 266, 268, and 280 each coordinate Ca(2+).

Belongs to the venom metalloproteinase (M12B) family. P-III subfamily. P-IIIa sub-subfamily. Monomer. Zn(2+) serves as cofactor. As to expression, expressed by the venom gland.

Its subcellular location is the secreted. Its function is as follows. Snake venom zinc protease that inhibits hemostasis by binding and cleaving the vWF in humans. Also has and inhibitory effect on the collagen-induced platelet aggregation. The polypeptide is Hemorrhagic metalloproteinase-disintegrin-like kaouthiagin (Naja kaouthia (Monocled cobra)).